The following is a 283-amino-acid chain: Phytanoyl-CoA dioxygenase (283 aa).

2-oxoglutarate-binding positions include Lys99, Met138, His153–Asp155, and Trp170. Fe cation-binding residues include His153 and Asp155. A Fe cation-binding site is contributed by His238. The 2-oxoglutarate site is built by Ser240 and Arg249.

This sequence belongs to the PhyH family. Fe cation serves as cofactor. It depends on L-ascorbate as a cofactor.

The enzyme catalyses phytanoyl-CoA + 2-oxoglutarate + O2 = 2-hydroxyphytanoyl-CoA + succinate + CO2. It functions in the pathway lipid metabolism; fatty acid metabolism. In terms of biological role, converts phytanoyl-CoA to 2-hydroxyphytanoyl-CoA. This chain is Phytanoyl-CoA dioxygenase, found in Arabidopsis thaliana (Mouse-ear cress).